A 208-amino-acid polypeptide reads, in one-letter code: MAVYVVDHPLVRHKIGILRMESTSTSEFRSVSNEVARLLIYEATKGFRTEKHTVQGWAGPVEIEAISGKKVTVVPILRAGLGLMDGVLDMIPGAKISVVGLYRNEETLEPVEYYVKLASDMDQRLAIILDPMLATGGSLIATIELLKRHGCRQICSLNLVCAPEGIAKVEAAHPDVDIYTAAIDDHLNEQGYIIPGLGDAGDRIFGTK.

5-phospho-alpha-D-ribose 1-diphosphate is bound by residues Arg78, Arg103, and 130–138 (DPMLATGGS). Residues Ile193 and 198-200 (GDA) contribute to the uracil site. Position 199 (Asp199) interacts with 5-phospho-alpha-D-ribose 1-diphosphate.

This sequence belongs to the UPRTase family. Mg(2+) is required as a cofactor.

The catalysed reaction is UMP + diphosphate = 5-phospho-alpha-D-ribose 1-diphosphate + uracil. It participates in pyrimidine metabolism; UMP biosynthesis via salvage pathway; UMP from uracil: step 1/1. With respect to regulation, allosterically activated by GTP. Functionally, catalyzes the conversion of uracil and 5-phospho-alpha-D-ribose 1-diphosphate (PRPP) to UMP and diphosphate. This chain is Uracil phosphoribosyltransferase, found in Desulfovibrio desulfuricans (strain ATCC 27774 / DSM 6949 / MB).